Here is a 251-residue protein sequence, read N- to C-terminus: Ditrans,polycis-undecaprenyl-diphosphate synthase ((2E,6E)-farnesyl-diphosphate specific) (251 aa).

D26 is an active-site residue. D26 serves as a coordination point for Mg(2+). Residues 27–30 (GNGR), W31, R39, H43, and 71–73 (SSE) contribute to the substrate site. N74 acts as the Proton acceptor in catalysis. Residues W75, R77, R194, and 200 to 202 (RIS) contribute to the substrate site. A Mg(2+)-binding site is contributed by E213.

It belongs to the UPP synthase family. Homodimer. Mg(2+) serves as cofactor.

The catalysed reaction is 8 isopentenyl diphosphate + (2E,6E)-farnesyl diphosphate = di-trans,octa-cis-undecaprenyl diphosphate + 8 diphosphate. In terms of biological role, catalyzes the sequential condensation of isopentenyl diphosphate (IPP) with (2E,6E)-farnesyl diphosphate (E,E-FPP) to yield (2Z,6Z,10Z,14Z,18Z,22Z,26Z,30Z,34E,38E)-undecaprenyl diphosphate (di-trans,octa-cis-UPP). UPP is the precursor of glycosyl carrier lipid in the biosynthesis of bacterial cell wall polysaccharide components such as peptidoglycan and lipopolysaccharide. This Buchnera aphidicola subsp. Acyrthosiphon pisum (strain APS) (Acyrthosiphon pisum symbiotic bacterium) protein is Ditrans,polycis-undecaprenyl-diphosphate synthase ((2E,6E)-farnesyl-diphosphate specific).